A 453-amino-acid polypeptide reads, in one-letter code: Probable glucan endo-1,3-beta-glucosidase eglC (453 aa).

The first 18 residues, 1 to 18 (MQTRQLLALALAVAATEA), serve as a signal peptide directing secretion. Catalysis depends on Glu-128, which acts as the Proton donor. N-linked (GlcNAc...) asparagine glycosylation occurs at Asn-183. Residue Glu-239 is the Nucleophile of the active site. Asn-364, Asn-368, and Asn-376 each carry an N-linked (GlcNAc...) asparagine glycan. A compositionally biased stretch (polar residues) spans 370 to 380 (TYPGSWNSTRP). The tract at residues 370-423 (TYPGSWNSTRPGANGGSSGSSGSSGSSGSSGSSGSSGSGASGHSSSTGSSSFPS) is disordered. Composition is skewed to low complexity over residues 389–402 (SSGSSGSSGSSGSS) and 410–423 (SGHSSSTGSSSFPS). Asn-430 carries the GPI-anchor amidated asparagine lipid modification. Residues 431 to 453 (SASGLSGSLFGAVAAVFVALAAL) constitute a propeptide, removed in mature form.

It belongs to the glycosyl hydrolase 17 family. The GPI-anchor is attached to the protein in the endoplasmic reticulum and serves to target the protein to the cell surface. There, the glucosamine-inositol phospholipid moiety is cleaved off and the GPI-modified mannoprotein is covalently attached via its lipidless GPI glycan remnant to the 1,6-beta-glucan of the outer cell wall layer.

The protein resides in the cell membrane. The protein localises to the secreted. Its subcellular location is the cell wall. It carries out the reaction Hydrolysis of (1-&gt;3)-beta-D-glucosidic linkages in (1-&gt;3)-beta-D-glucans.. Glucanases play a role in cell expansion during growth, in cell-cell fusion during mating, and in spore release during sporulation. This enzyme may be involved in beta-glucan degradation and also function biosynthetically as a transglycosylase. The polypeptide is Probable glucan endo-1,3-beta-glucosidase eglC (eglC) (Aspergillus clavatus (strain ATCC 1007 / CBS 513.65 / DSM 816 / NCTC 3887 / NRRL 1 / QM 1276 / 107)).